The chain runs to 632 residues: Probable extracellular metalloproteinase 2 (632 aa).

The signal sequence occupies residues 1–19 (MHGLLLAGLAAALPLGVAG). Positions 20–244 (LPARQQSGLS…VHNVVDYVAS (225 aa)) are excised as a propeptide. N-linked (GlcNAc...) asparagine glycans are attached at residues asparagine 81 and asparagine 270. Histidine 429 is a binding site for Zn(2+). Glutamate 430 is an active-site residue. A Zn(2+)-binding site is contributed by histidine 433.

This sequence belongs to the peptidase M36 family. Zn(2+) is required as a cofactor.

Its subcellular location is the secreted. Functionally, secreted metalloproteinase probably acting as a virulence factor. This Arthroderma benhamiae (strain ATCC MYA-4681 / CBS 112371) (Trichophyton mentagrophytes) protein is Probable extracellular metalloproteinase 2 (MEP2).